Here is a 142-residue protein sequence, read N- to C-terminus: Small ribosomal subunit protein uS19 (142 aa).

This sequence belongs to the universal ribosomal protein uS19 family. As to quaternary structure, component of the small ribosomal subunit. Mature ribosomes consist of a small (40S) and a large (60S) subunit. The 40S subunit contains about 32 different proteins and 1 molecule of RNA (18S). The 60S subunit contains 45 different proteins and 3 molecules of RNA (25S, 5.8S and 5S).

Its subcellular location is the cytoplasm. Component of the ribosome, a large ribonucleoprotein complex responsible for the synthesis of proteins in the cell. The small ribosomal subunit (SSU) binds messenger RNAs (mRNAs) and translates the encoded message by selecting cognate aminoacyl-transfer RNA (tRNA) molecules. The large subunit (LSU) contains the ribosomal catalytic site termed the peptidyl transferase center (PTC), which catalyzes the formation of peptide bonds, thereby polymerizing the amino acids delivered by tRNAs into a polypeptide chain. The nascent polypeptides leave the ribosome through a tunnel in the LSU and interact with protein factors that function in enzymatic processing, targeting, and the membrane insertion of nascent chains at the exit of the ribosomal tunnel. RPS15 has a role in the late stage of the assembly of pre-40S particles within the nucleus and controls their export to the cytoplasm. This is Small ribosomal subunit protein uS19 (RPS15) from Candida albicans (strain SC5314 / ATCC MYA-2876) (Yeast).